Consider the following 756-residue polypeptide: Ent-kaur-16-ene synthase, chloroplastic (756 aa).

D496, D500, N639, and E647 together coordinate Mg(2+). Residues 496-500 carry the DDXXD motif motif; it reads DDFFD.

This sequence belongs to the terpene synthase family. The cofactor is Mg(2+). In terms of tissue distribution, highly expressed in panicles and at lower levels in leaves and stems.

The protein localises to the plastid. It localises to the chloroplast. The catalysed reaction is ent-copalyl diphosphate = ent-kaur-16-ene + diphosphate. The protein operates within plant hormone biosynthesis; gibberellin biosynthesis. In terms of biological role, catalyzes the conversion of ent-copalyl diphosphate to the gibberellin precursor ent-kaur-16-ene. In Oryza sativa subsp. japonica (Rice), this protein is Ent-kaur-16-ene synthase, chloroplastic (KS1).